The primary structure comprises 78 residues: Cytochrome c-551 (78 aa).

Residues cysteine 14, cysteine 17, histidine 18, and methionine 55 each contribute to the heme c site.

Binds 1 heme c group covalently per subunit.

This Halorhodospira halophila (Ectothiorhodospira halophila) protein is Cytochrome c-551.